The sequence spans 83 residues: Turripeptide Lol11.1 (83 aa).

The N-terminal stretch at 1–27 (MARQMMTVGCLILIVVLLDMMVPVFNT) is a signal peptide.

Belongs to the conopeptide I2-like superfamily. In terms of processing, contains 4 disulfide bonds. As to expression, expressed by the venom duct.

The protein localises to the secreted. In terms of biological role, acts as a neurotoxin by inhibiting voltage-gated potassium channels (Kv). The chain is Turripeptide Lol11.1 from Iotyrris olangoensis (Sea snail).